The primary structure comprises 401 residues: Large ribosomal subunit protein uL3 (401 aa).

The disordered stretch occupies residues 1–21 (MSHRKFSAPRHGHMGFTPKKR).

Belongs to the universal ribosomal protein uL3 family.

The protein resides in the cytoplasm. Functionally, the L3 protein is a component of the large subunit of cytoplasmic ribosomes. This chain is Large ribosomal subunit protein uL3 (rpl-3), found in Caenorhabditis briggsae.